Here is a 373-residue protein sequence, read N- to C-terminus: Anhydro-N-acetylmuramic acid kinase (373 aa).

12 to 19 serves as a coordination point for ATP; the sequence is GTSLDGVD.

This sequence belongs to the anhydro-N-acetylmuramic acid kinase family.

It carries out the reaction 1,6-anhydro-N-acetyl-beta-muramate + ATP + H2O = N-acetyl-D-muramate 6-phosphate + ADP + H(+). Its pathway is amino-sugar metabolism; 1,6-anhydro-N-acetylmuramate degradation. It functions in the pathway cell wall biogenesis; peptidoglycan recycling. In terms of biological role, catalyzes the specific phosphorylation of 1,6-anhydro-N-acetylmuramic acid (anhMurNAc) with the simultaneous cleavage of the 1,6-anhydro ring, generating MurNAc-6-P. Is required for the utilization of anhMurNAc either imported from the medium or derived from its own cell wall murein, and thus plays a role in cell wall recycling. The chain is Anhydro-N-acetylmuramic acid kinase from Serratia proteamaculans (strain 568).